The primary structure comprises 417 residues: Probable serine/threonine-protein kinase WNK9 (417 aa).

The segment at 1-23 (MDLVEAEAEEQPPDEDGDEEGYV) is disordered. The Protein kinase domain maps to 32 to 289 (IRYDEIVGSG…ATELLKSSFL (258 aa)). ATP-binding positions include 113–116 (TELF) and lysine 163. The Proton acceptor role is filled by aspartate 180.

This sequence belongs to the protein kinase superfamily. Ser/Thr protein kinase family. WNK subfamily.

The enzyme catalyses L-seryl-[protein] + ATP = O-phospho-L-seryl-[protein] + ADP + H(+). It carries out the reaction L-threonyl-[protein] + ATP = O-phospho-L-threonyl-[protein] + ADP + H(+). The sequence is that of Probable serine/threonine-protein kinase WNK9 (WNK9) from Oryza sativa subsp. japonica (Rice).